The following is a 610-amino-acid chain: UvrABC system protein C (610 aa).

The 79-residue stretch at 16 to 94 folds into the GIY-YIG domain; it reads SQPGVYRMYD…IKLYQPRYNV (79 aa). Residues 204 to 239 enclose the UVR domain; sequence QQVLNQLISRMESASRDLRFEDAARIRDQIQAVRRV.

This sequence belongs to the UvrC family. In terms of assembly, interacts with UvrB in an incision complex.

It localises to the cytoplasm. Functionally, the UvrABC repair system catalyzes the recognition and processing of DNA lesions. UvrC both incises the 5' and 3' sides of the lesion. The N-terminal half is responsible for the 3' incision and the C-terminal half is responsible for the 5' incision. The chain is UvrABC system protein C from Pectobacterium atrosepticum (strain SCRI 1043 / ATCC BAA-672) (Erwinia carotovora subsp. atroseptica).